We begin with the raw amino-acid sequence, 42 residues long: Delta-hexatoxin-Hv1b (42 aa).

4 cysteine pairs are disulfide-bonded: C1-C15, C8-C20, C14-C31, and C16-C42.

This sequence belongs to the neurotoxin 06 (delta-actx) family. As to expression, expressed by the venom gland.

It localises to the secreted. Functionally, lethal neurotoxin. Slows the inactivation of tetrodotoxin-sensitive voltage-gated sodium channels (Nav) by binding to site 3 of the channel, resulting in repetitive firing in autonomic and motor nerve fibers. The chain is Delta-hexatoxin-Hv1b from Hadronyche versuta (Blue mountains funnel-web spider).